The sequence spans 885 residues: DNA mismatch repair protein MutS (885 aa).

640–647 contributes to the ATP binding site; sequence GPNMGGKS.

Belongs to the DNA mismatch repair MutS family.

In terms of biological role, this protein is involved in the repair of mismatches in DNA. It is possible that it carries out the mismatch recognition step. This protein has a weak ATPase activity. In Variovorax paradoxus (strain S110), this protein is DNA mismatch repair protein MutS.